A 369-amino-acid chain; its full sequence is Anhydro-N-acetylmuramic acid kinase (369 aa).

12–19 is an ATP binding site; that stretch reads GTSMDGVD.

This sequence belongs to the anhydro-N-acetylmuramic acid kinase family.

The enzyme catalyses 1,6-anhydro-N-acetyl-beta-muramate + ATP + H2O = N-acetyl-D-muramate 6-phosphate + ADP + H(+). Its pathway is amino-sugar metabolism; 1,6-anhydro-N-acetylmuramate degradation. The protein operates within cell wall biogenesis; peptidoglycan recycling. Its function is as follows. Catalyzes the specific phosphorylation of 1,6-anhydro-N-acetylmuramic acid (anhMurNAc) with the simultaneous cleavage of the 1,6-anhydro ring, generating MurNAc-6-P. Is required for the utilization of anhMurNAc either imported from the medium or derived from its own cell wall murein, and thus plays a role in cell wall recycling. The polypeptide is Anhydro-N-acetylmuramic acid kinase (Shewanella woodyi (strain ATCC 51908 / MS32)).